The sequence spans 260 residues: NH(3)-dependent NAD(+) synthetase (260 aa).

31-38 (GLSGGLDS) contributes to the ATP binding site. Mg(2+) is bound at residue aspartate 37. Arginine 112 contributes to the deamido-NAD(+) binding site. Threonine 132 is an ATP binding site. Glutamate 137 lines the Mg(2+) pocket. Residues lysine 161 and serine 183 each contribute to the ATP site.

Belongs to the NAD synthetase family. In terms of assembly, homodimer.

The catalysed reaction is deamido-NAD(+) + NH4(+) + ATP = AMP + diphosphate + NAD(+) + H(+). It functions in the pathway cofactor biosynthesis; NAD(+) biosynthesis; NAD(+) from deamido-NAD(+) (ammonia route): step 1/1. Catalyzes the ATP-dependent amidation of deamido-NAD to form NAD. Uses ammonia as a nitrogen source. The chain is NH(3)-dependent NAD(+) synthetase from Helicobacter pylori (strain HPAG1).